A 465-amino-acid chain; its full sequence is Dihydrolipoyllysine-residue acetyltransferase component 5 of pyruvate dehydrogenase complex, chloroplastic (465 aa).

The transit peptide at 1–31 (MSRLLQTPFLPSVSLPTKTRSSVTGFRVKPR) directs the protein to the chloroplast. The Lipoyl-binding domain maps to 39 to 114 (IREIFMPALS…PVGSAIALLA (76 aa)). Lys80 is modified (N6-lipoyllysine). The disordered stretch occupies residues 123 to 148 (AKAKASGGGGGGDSKAPPASPPTAAV). Over residues 136–148 (SKAPPASPPTAAV) the composition is skewed to low complexity. Residues 184-221 (VASPYAKKLAKELKVELAGLVGSGPMGRIVAKDVEAVA) enclose the Peripheral subunit-binding (PSBD) domain. The active site involves His438.

The protein belongs to the 2-oxoacid dehydrogenase family. The cofactor is (R)-lipoate.

It localises to the plastid. Its subcellular location is the chloroplast stroma. The enzyme catalyses N(6)-[(R)-dihydrolipoyl]-L-lysyl-[protein] + acetyl-CoA = N(6)-[(R)-S(8)-acetyldihydrolipoyl]-L-lysyl-[protein] + CoA. Functionally, the pyruvate dehydrogenase complex catalyzes the overall conversion of pyruvate to acetyl-CoA and CO(2). It contains multiple copies of three enzymatic components: pyruvate dehydrogenase (E1), dihydrolipoamide acetyltransferase (E2) and lipoamide dehydrogenase (E3). This Arabidopsis thaliana (Mouse-ear cress) protein is Dihydrolipoyllysine-residue acetyltransferase component 5 of pyruvate dehydrogenase complex, chloroplastic (EMB3003).